A 174-amino-acid chain; its full sequence is Gamma-crystallin A (174 aa).

Beta/gamma crystallin 'Greek key' domains follow at residues 2–40 (GKIT…RVDS) and 41–83 (GCWM…RIIP). Residues 84 to 87 (HTSS) form a connecting peptide region. 2 Beta/gamma crystallin 'Greek key' domains span residues 88–128 (HKLR…HVLE) and 129–171 (GCWV…RRVT).

The protein belongs to the beta/gamma-crystallin family. In terms of assembly, monomer.

Its function is as follows. Crystallins are the dominant structural components of the vertebrate eye lens. The chain is Gamma-crystallin A (CRYGA) from Homo sapiens (Human).